Reading from the N-terminus, the 428-residue chain is UPF0229 protein YeaH (428 aa).

Positions 78–90 are enriched in basic and acidic residues; the sequence is GNDHFIQNDRIER. The segment at 78 to 111 is disordered; it reads GNDHFIQNDRIERPQGGGGGGSGSGQGQASQDGE. Positions 92 to 103 are enriched in gly residues; sequence QGGGGGGSGSGQ.

Belongs to the UPF0229 family.

The polypeptide is UPF0229 protein YeaH (Salmonella paratyphi C (strain RKS4594)).